The following is a 301-amino-acid chain: Transcriptional activator FeaR (301 aa).

An HTH araC/xylS-type domain is found at 199 to 299 (QKVVTLIDDN…GMTPGEYRRK (101 aa)). DNA-binding regions (H-T-H motif) lie at residues 217-238 (EWIA…ADKG) and 266-289 (LAGI…KQRF).

In terms of biological role, positive regulator of tynA/maoA and feaB/padA, the genes for 2-phenylethylamine catabolism. This is Transcriptional activator FeaR (feaR) from Escherichia coli (strain K12).